A 288-amino-acid polypeptide reads, in one-letter code: Orotidine 5'-phosphate decarboxylase (288 aa).

The active-site Proton donor is the Lys99.

It belongs to the OMP decarboxylase family. Type 2 subfamily.

It carries out the reaction orotidine 5'-phosphate + H(+) = UMP + CO2. Its pathway is pyrimidine metabolism; UMP biosynthesis via de novo pathway; UMP from orotate: step 2/2. The protein is Orotidine 5'-phosphate decarboxylase (pyrF) of Myxococcus xanthus (strain DK1622).